A 211-amino-acid chain; its full sequence is Thymidylate kinase (211 aa).

7–14 (GCEGSGKS) lines the ATP pocket.

The protein belongs to the thymidylate kinase family.

The catalysed reaction is dTMP + ATP = dTDP + ADP. Its function is as follows. Phosphorylation of dTMP to form dTDP in both de novo and salvage pathways of dTTP synthesis. The protein is Thymidylate kinase of Chlamydia abortus (strain DSM 27085 / S26/3) (Chlamydophila abortus).